The following is a 245-amino-acid chain: NAD-dependent protein deacylase (245 aa).

The region spanning 1-237 (MNFPYRNIVV…PKLVEELLAH (237 aa)) is the Deacetylase sirtuin-type domain. NAD(+) is bound at residue 13–32 (GAGISAESGIQTFRAQDGLW). The substrate site is built by Tyr-57 and Arg-60. 94–97 (QNID) contacts NAD(+). His-112 (proton acceptor) is an active-site residue. Zn(2+) is bound by residues Cys-120 and Cys-139. Residues 179 to 181 (GTS), 205 to 207 (NLE), and Ala-223 each bind NAD(+).

It belongs to the sirtuin family. Class III subfamily. The cofactor is Zn(2+).

Its subcellular location is the cytoplasm. The enzyme catalyses N(6)-acetyl-L-lysyl-[protein] + NAD(+) + H2O = 2''-O-acetyl-ADP-D-ribose + nicotinamide + L-lysyl-[protein]. It carries out the reaction N(6)-succinyl-L-lysyl-[protein] + NAD(+) + H2O = 2''-O-succinyl-ADP-D-ribose + nicotinamide + L-lysyl-[protein]. NAD-dependent lysine deacetylase and desuccinylase that specifically removes acetyl and succinyl groups on target proteins. Modulates the activities of several proteins which are inactive in their acylated form. The polypeptide is NAD-dependent protein deacylase (Vibrio vulnificus (strain YJ016)).